Reading from the N-terminus, the 510-residue chain is Sphingolipid C9-methyltransferase B (510 aa).

Asparagine 55 is a glycosylation site (N-linked (GlcNAc...) asparagine). Helical transmembrane passes span leucine 62–alanine 82 and threonine 84–alanine 104. N-linked (GlcNAc...) asparagine glycosylation is present at asparagine 175. S-adenosyl-L-methionine contacts are provided by residues tyrosine 227 to threonine 228, methionine 264 to glycine 272, threonine 290 to glutamine 295, and tyrosine 320 to arginine 321. Asparagine 294 carries N-linked (GlcNAc...) asparagine glycosylation.

It belongs to the CFA/CMAS family.

It is found in the membrane. The catalysed reaction is a (4E,8E)-4-sphinga-4,8-dienine ceramide + S-adenosyl-L-methionine = a 9-methyl-(4E,8E)-sphinga-4,8-dienine ceramide + S-adenosyl-L-homocysteine + H(+). The protein operates within lipid metabolism; sphingolipid metabolism. In terms of biological role, catalyzes methylation of the sphingoid base component of glucosylceramides (GluCers) at the C9-position. Sphingolipid C9-methylation requires 4,8-desaturated ceramides as substrates. Glucosylceramides play important roles in growth, differentiation and pathogenicity. The methyl group at the C9-position distinguishes fungal glucosylceramides from those of plants and animals and may thus play a role in host-pathogen interactions enabling the host to recognize the fungal attack and initiate specific defense responses. The polypeptide is Sphingolipid C9-methyltransferase B (Emericella nidulans (strain FGSC A4 / ATCC 38163 / CBS 112.46 / NRRL 194 / M139) (Aspergillus nidulans)).